An 83-amino-acid polypeptide reads, in one-letter code: Ardiscretin (83 aa).

Residues 1 to 20 (MKGMIMLISCLMLIDVVVES) form the signal peptide. The 62-residue stretch at 21–82 (KNGYIIEPKG…IFDYYNNKCG (62 aa)) folds into the LCN-type CS-alpha/beta domain. 4 cysteine pairs are disulfide-bonded: Cys-31-Cys-81, Cys-35-Cys-57, Cys-43-Cys-62, and Cys-47-Cys-64. Cys-81 bears the Cysteine amide mark.

As to expression, expressed by the venom gland.

The protein resides in the secreted. Its function is as follows. Inhibits the sodium (Nav) currents in an apparent irreversible manner. Produces small depolarization and induces repetitive firing in squid axons. Is specific for arthropods (crickets, triatomides, crabs and squids), but is non-toxic to mice. Shows antibacterial activity against both Gram-positive and Gram-negative bacteria. This chain is Ardiscretin, found in Tityus discrepans (Venezuelan scorpion).